Reading from the N-terminus, the 166-residue chain is NADH-ubiquinone oxidoreductase chain 6 (166 aa).

Transmembrane regions (helical) follow at residues 1–21, 26–46, 47–67, 86–106, and 139–159; these read MMYF…AFAS, IYGG…IVSL, GGSF…LVVF, TVVL…YEFF, and CGGW…FVVL.

The protein belongs to the complex I subunit 6 family. As to quaternary structure, core subunit of respiratory chain NADH dehydrogenase (Complex I) which is composed of 45 different subunits.

The protein resides in the mitochondrion inner membrane. The enzyme catalyses a ubiquinone + NADH + 5 H(+)(in) = a ubiquinol + NAD(+) + 4 H(+)(out). Functionally, core subunit of the mitochondrial membrane respiratory chain NADH dehydrogenase (Complex I) which catalyzes electron transfer from NADH through the respiratory chain, using ubiquinone as an electron acceptor. Essential for the catalytic activity and assembly of complex I. This is NADH-ubiquinone oxidoreductase chain 6 (MT-ND6) from Tachyglossus aculeatus aculeatus (Southeast Australian short-beaked echidna).